Consider the following 62-residue polypeptide: Sperm protamine P1 (62 aa).

Residues 1-46 (MARCRRHSRSRSRSRNQCQRRRRRHYNRRRTYRRSRRHSRRRRVRR) are disordered.

This sequence belongs to the protamine P1 family. As to expression, testis.

Its subcellular location is the nucleus. The protein resides in the chromosome. In terms of biological role, protamines substitute for histones in the chromatin of sperm during the haploid phase of spermatogenesis. They compact sperm DNA into a highly condensed, stable and inactive complex. The protein is Sperm protamine P1 (PRM1) of Planigale gilesi (Flat-skulled marsupial mouse).